Reading from the N-terminus, the 285-residue chain is MKVFILALLALTATTAIAQLETTCSQGFGQSQQQQQPGQRQLLEQMKPCVAFLQQKCSPLRMPFLQTQVEQLSSCQIVQYQCCQQLAQIPERTRCHAIHIVVEAIIQQQSQQQWQEPQQQAQHKSMRMLLENLSLMCNIYVPVQCQQQQQMGQQPQQQQLQEQLTPCATFLQHQCSPVTVPFPQIPVDQPTSCQNVQHQCCRQLSQIPEQFRCQAIHNVAEAIRQQQPQQQWQGMYQPQQPAQHESIRMSLQALRSMCNIYIPVQCPAPTAYNIPMVATCTSGAC.

A signal peptide spans 1–18 (MKVFILALLALTATTAIA).

The protein belongs to the prolamin family. In terms of processing, contains disulfide bonds.

In terms of biological role, seed storage protein. Might be integrated via inter-chain disulfide bonds within the glutenin polymer. This is Avenin-like b2 from Triticum aestivum (Wheat).